Consider the following 361-residue polypeptide: Phenylalanine--tRNA ligase alpha subunit (361 aa).

Glu-260 contacts Mg(2+).

Belongs to the class-II aminoacyl-tRNA synthetase family. Phe-tRNA synthetase alpha subunit type 1 subfamily. Tetramer of two alpha and two beta subunits. The cofactor is Mg(2+).

The protein localises to the cytoplasm. It carries out the reaction tRNA(Phe) + L-phenylalanine + ATP = L-phenylalanyl-tRNA(Phe) + AMP + diphosphate + H(+). In Bartonella henselae (strain ATCC 49882 / DSM 28221 / CCUG 30454 / Houston 1) (Rochalimaea henselae), this protein is Phenylalanine--tRNA ligase alpha subunit.